The chain runs to 167 residues: Low molecular mass early light-inducible protein HV60, chloroplastic (167 aa).

A chloroplast-targeting transit peptide spans 1 to 33 (MATMMAMSSFAGAAVLPRGSARSLPALGRRTLV). 2 helical membrane-spanning segments follow: residues 101 to 121 (GQAWFAYTVAMLSMASLVPLL) and 145 to 165 (FAMIGLVALAATEIITGTPFI).

The protein belongs to the ELIP/psbS family.

The protein resides in the plastid. Its subcellular location is the chloroplast membrane. Functionally, probably involved in the integration of pigments into the mature pigment-protein complexes. This chain is Low molecular mass early light-inducible protein HV60, chloroplastic, found in Hordeum vulgare (Barley).